The chain runs to 239 residues: DNA repair protein RecO (239 aa).

Belongs to the RecO family.

Involved in DNA repair and RecF pathway recombination. The protein is DNA repair protein RecO of Bifidobacterium longum (strain DJO10A).